The following is a 336-amino-acid chain: MATLHAPAFELPEILNTKTNLADARIGAQVIECSDDFFAEAKRMLQFEAPIFVEDKFDDHGKWMDGWESRRKRHAGYDWCIVKLGVSGKISALDIDTTFFTGNYPASASLEACYAPNGDLTGVTWQSILENTELGPSQHHIFMVNNDAIFTHIRLNIFPDGGIARLRVYGDVHIQVTDHEQTLDLLALENGGRVIAYSDAHFGHPRNLINPGRGVNMGDGWETKRRRAPGYDWCILALGKSGKIEKIEIDTAHFKGNFPAEVSIQAVYLENATDAQLIPQSMFWSYLLEAQPMQMDHIHEYMNEILQHEKVSHIRINMIPDGGISRVRLWGKIAKS.

Belongs to the allantoicase family.

The enzyme catalyses allantoate + H2O = (S)-ureidoglycolate + urea. The protein operates within nitrogen metabolism; (S)-allantoin degradation; (S)-ureidoglycolate from allantoate (aminidohydrolase route): step 1/1. This Acinetobacter baumannii (strain ACICU) protein is Probable allantoicase.